The chain runs to 1572 residues: E3 ubiquitin-protein ligase HECW2 (1572 aa).

At Ser-48 the chain carries Phosphoserine. The 135-residue stretch at 167–301 folds into the C2 domain; it reads GAEGMEGGAS…QAIGDQMLSY (135 aa). 2 disordered regions span residues 341 to 452 and 489 to 796; these read VNSV…SSFP and IMFS…PSVR. Low complexity predominate over residues 400-410; sequence TSTSSRTSPPR. A compositionally biased stretch (basic and acidic residues) spans 518–532; sequence ASTHEAASFEDKPEN. 4 stretches are compositionally biased toward polar residues: residues 572-588, 597-614, 643-664, and 688-703; these read EVDQ…SDAS, ETES…SSET, SSCN…SSLE, and PTSS…SVCT. The segment at 737 to 1068 is interaction with TP73; that stretch reads WQRRGSLEGA…PRPSSTFNTV (332 aa). Over residues 744–776 the composition is skewed to low complexity; the sequence is EGAAAAAESPPQEEGSAGEAQGTCEGATAQEEG. In terms of domain architecture, WW 1 spans 807-840; sequence EALPPNWEARIDSHGRIFYVDHVNRTTTWQRPTA. Residues 847–874 are a coiled coil; it reads LQRSNSIQQMEQLNRRYQSIRRTMTNER. A phosphoserine mark is found at Ser-852 and Ser-909. The WW 2 domain occupies 985–1018; the sequence is LELPRGWEMKHDHQGKAFFVDHNSRTTTFIDPRL. 2 disordered regions span residues 1024–1069 and 1161–1187; these read RPTS…NTVS and CQSP…RAPA. Residues 1031–1040 show a composition bias toward basic residues; that stretch reads HRQHLTRQRS. Residues 1161-1181 are compositionally biased toward polar residues; sequence CQSPRGSPVSSPQNSPGTQRA. Residue Ser-1175 is modified to Phosphoserine. Positions 1237 to 1572 constitute an HECT domain; the sequence is SRKDLQRNKL…VEETSTFGLE (336 aa). The active-site Glycyl thioester intermediate is the Cys-1540.

In terms of assembly, interacts with TP73. Interacts with FZR1. In terms of processing, ubiquitinated and degraded during mitotic exit by APC/C-Cdh1. In terms of tissue distribution, predominantly expressed in adult brain, lung and heart.

Its subcellular location is the cytoplasm. The protein resides in the cytoskeleton. The protein localises to the spindle. The catalysed reaction is S-ubiquitinyl-[E2 ubiquitin-conjugating enzyme]-L-cysteine + [acceptor protein]-L-lysine = [E2 ubiquitin-conjugating enzyme]-L-cysteine + N(6)-ubiquitinyl-[acceptor protein]-L-lysine.. Its pathway is protein modification; protein ubiquitination. Its function is as follows. E3 ubiquitin-protein ligase that mediates ubiquitination of TP73. Acts to stabilize TP73 and enhance activation of transcription by TP73. Involved in the regulation of mitotic metaphase/anaphase transition. The sequence is that of E3 ubiquitin-protein ligase HECW2 (HECW2) from Homo sapiens (Human).